We begin with the raw amino-acid sequence, 573 residues long: Ribonuclease J (573 aa).

Positions 1-29 (MENQERKPRRRRRRRPQEGSQGGPQDHVE) are disordered. Zn(2+) contacts are provided by His93, His95, Asp97, His98, His168, and Asp190. Residues 259–261 (ASH) and 390–394 (HASGH) each bind substrate. His416 is a binding site for Zn(2+).

The protein belongs to the metallo-beta-lactamase superfamily. RNA-metabolizing metallo-beta-lactamase-like family. Bacterial RNase J subfamily. Homodimer. May be a subunit of the RNA degradosome. Zn(2+) is required as a cofactor.

The protein resides in the cytoplasm. Functionally, an RNase that has endonuclease and possibly 5'-3' exonuclease activity. Probably involved in maturation of rRNA and in some organisms also mRNA maturation and/or decay. This is Ribonuclease J from Thermus thermophilus (strain ATCC BAA-163 / DSM 7039 / HB27).